The sequence spans 240 residues: Ribonuclease PH (240 aa).

Phosphate-binding positions include R87 and 125–127 (GTR).

It belongs to the RNase PH family. As to quaternary structure, homohexameric ring arranged as a trimer of dimers.

It catalyses the reaction tRNA(n+1) + phosphate = tRNA(n) + a ribonucleoside 5'-diphosphate. Phosphorolytic 3'-5' exoribonuclease that plays an important role in tRNA 3'-end maturation. Removes nucleotide residues following the 3'-CCA terminus of tRNAs; can also add nucleotides to the ends of RNA molecules by using nucleoside diphosphates as substrates, but this may not be physiologically important. Probably plays a role in initiation of 16S rRNA degradation (leading to ribosome degradation) during starvation. The chain is Ribonuclease PH from Pseudomonas fluorescens (strain SBW25).